Reading from the N-terminus, the 785-residue chain is Penicillin-binding protein 1A (785 aa).

Residues methionine 1–glycine 61 form a disordered region. Positions serine 33–glycine 45 are enriched in pro residues. Gly residues predominate over residues arginine 46–glycine 59. Residues isoleucine 77 to valine 97 form a helical membrane-spanning segment. The transglycosylase stretch occupies residues glycine 118–valine 299. The Proton donor; for transglycosylase activity role is filled by glutamate 151. The tract at residues alanine 392–tryptophan 662 is transpeptidase. Serine 426 acts as the Acyl-ester intermediate; for transpeptidase activity in catalysis. 3 disordered regions span residues serine 605–glycine 626, glutamate 690–valine 726, and glycine 738–proline 785. Composition is skewed to pro residues over residues proline 708–proline 721 and isoleucine 743–proline 758. Over residues glycine 759–alanine 775 the composition is skewed to low complexity.

The protein resides in the cell membrane. It catalyses the reaction [GlcNAc-(1-&gt;4)-Mur2Ac(oyl-L-Ala-gamma-D-Glu-L-Lys-D-Ala-D-Ala)](n)-di-trans,octa-cis-undecaprenyl diphosphate + beta-D-GlcNAc-(1-&gt;4)-Mur2Ac(oyl-L-Ala-gamma-D-Glu-L-Lys-D-Ala-D-Ala)-di-trans,octa-cis-undecaprenyl diphosphate = [GlcNAc-(1-&gt;4)-Mur2Ac(oyl-L-Ala-gamma-D-Glu-L-Lys-D-Ala-D-Ala)](n+1)-di-trans,octa-cis-undecaprenyl diphosphate + di-trans,octa-cis-undecaprenyl diphosphate + H(+). The enzyme catalyses Preferential cleavage: (Ac)2-L-Lys-D-Ala-|-D-Ala. Also transpeptidation of peptidyl-alanyl moieties that are N-acyl substituents of D-alanine.. The protein operates within cell wall biogenesis; peptidoglycan biosynthesis. In terms of biological role, cell wall formation. Synthesis of cross-linked peptidoglycan from the lipid intermediates. The enzyme has a penicillin-insensitive transglycosylase N-terminal domain (formation of linear glycan strands) and a penicillin-sensitive transpeptidase C-terminal domain (cross-linking of the peptide subunits). The sequence is that of Penicillin-binding protein 1A (ponA1) from Mycolicibacterium smegmatis (strain ATCC 700084 / mc(2)155) (Mycobacterium smegmatis).